Consider the following 316-residue polypeptide: Acetyl-coenzyme A carboxylase carboxyl transferase subunit alpha (316 aa).

In terms of domain architecture, CoA carboxyltransferase C-terminal spans 40–290 (KARKELQRIY…RERFAHHLQE (251 aa)).

Belongs to the AccA family. In terms of assembly, acetyl-CoA carboxylase is a heterohexamer composed of biotin carboxyl carrier protein (AccB), biotin carboxylase (AccC) and two subunits each of ACCase subunit alpha (AccA) and ACCase subunit beta (AccD).

It localises to the cytoplasm. It catalyses the reaction N(6)-carboxybiotinyl-L-lysyl-[protein] + acetyl-CoA = N(6)-biotinyl-L-lysyl-[protein] + malonyl-CoA. It participates in lipid metabolism; malonyl-CoA biosynthesis; malonyl-CoA from acetyl-CoA: step 1/1. Component of the acetyl coenzyme A carboxylase (ACC) complex. First, biotin carboxylase catalyzes the carboxylation of biotin on its carrier protein (BCCP) and then the CO(2) group is transferred by the carboxyltransferase to acetyl-CoA to form malonyl-CoA. The chain is Acetyl-coenzyme A carboxylase carboxyl transferase subunit alpha from Acidithiobacillus ferrooxidans (strain ATCC 23270 / DSM 14882 / CIP 104768 / NCIMB 8455) (Ferrobacillus ferrooxidans (strain ATCC 23270)).